A 187-amino-acid polypeptide reads, in one-letter code: Elongation factor P (187 aa).

Belongs to the elongation factor P family.

The protein localises to the cytoplasm. Its pathway is protein biosynthesis; polypeptide chain elongation. In terms of biological role, involved in peptide bond synthesis. Stimulates efficient translation and peptide-bond synthesis on native or reconstituted 70S ribosomes in vitro. Probably functions indirectly by altering the affinity of the ribosome for aminoacyl-tRNA, thus increasing their reactivity as acceptors for peptidyl transferase. This Prochlorococcus marinus (strain NATL2A) protein is Elongation factor P.